Reading from the N-terminus, the 302-residue chain is Quinolinate synthase (302 aa).

Iminosuccinate-binding residues include His25 and Ser42. Cys87 is a binding site for [4Fe-4S] cluster. Iminosuccinate is bound by residues 113-115 (YVN) and Ser130. A [4Fe-4S] cluster-binding site is contributed by Cys172. Residues 198–200 (HPE) and Thr215 each bind iminosuccinate. Cys260 lines the [4Fe-4S] cluster pocket.

It belongs to the quinolinate synthase family. Type 2 subfamily. [4Fe-4S] cluster is required as a cofactor.

The protein resides in the cytoplasm. The enzyme catalyses iminosuccinate + dihydroxyacetone phosphate = quinolinate + phosphate + 2 H2O + H(+). It functions in the pathway cofactor biosynthesis; NAD(+) biosynthesis; quinolinate from iminoaspartate: step 1/1. Its function is as follows. Catalyzes the condensation of iminoaspartate with dihydroxyacetone phosphate to form quinolinate. This chain is Quinolinate synthase, found in Methanoregula boonei (strain DSM 21154 / JCM 14090 / 6A8).